Reading from the N-terminus, the 186-residue chain is Cell division protein SepF (186 aa).

Disordered regions lie at residues 14 to 59 (EHDE…NETS) and 157 to 186 (GRSQ…RLAQ). A compositionally biased stretch (acidic residues) spans 16-27 (DEYEEDYDEEME). The segment covering 159–171 (SQESNETSSSVSS) has biased composition (low complexity).

The protein belongs to the SepF family. In terms of assembly, homodimer. Interacts with FtsZ.

It localises to the cytoplasm. Cell division protein that is part of the divisome complex and is recruited early to the Z-ring. Probably stimulates Z-ring formation, perhaps through the cross-linking of FtsZ protofilaments. Its function overlaps with FtsA. This Synechocystis sp. (strain ATCC 27184 / PCC 6803 / Kazusa) protein is Cell division protein SepF.